The chain runs to 306 residues: Thiamine-monophosphate kinase (306 aa).

The Mg(2+) site is built by Asp-27, Thr-41, Thr-42, and Asp-43. Position 50 (His-50) interacts with substrate. A Mg(2+)-binding site is contributed by Asp-71. ATP-binding positions include Tyr-101, Gly-118 to Asn-119, and Arg-142. Asn-119 serves as a coordination point for Mg(2+). Asp-207 serves as a coordination point for Mg(2+). Ser-209 provides a ligand contact to ATP. Asp-210 provides a ligand contact to Mg(2+). Residues Glu-260 and Trp-303 each coordinate substrate.

This sequence belongs to the thiamine-monophosphate kinase family. Homodimer.

The enzyme catalyses thiamine phosphate + ATP = thiamine diphosphate + ADP. It participates in cofactor biosynthesis; thiamine diphosphate biosynthesis; thiamine diphosphate from thiamine phosphate: step 1/1. Functionally, catalyzes the ATP-dependent phosphorylation of thiamine-monophosphate (TMP) to form thiamine-pyrophosphate (TPP), the active form of vitamin B1. The chain is Thiamine-monophosphate kinase (thiL) from Aquifex aeolicus (strain VF5).